A 148-amino-acid chain; its full sequence is uncharacterized protein (148 aa).

3 helical membrane passes run 25–45, 85–105, and 118–138; these read FCTVGVGNTLIDFGVFFLLTA, IVRFLMINIAASGITFLLLYL, and LAATIGGMMMNFIGNRIWVFG.

Belongs to the GtrA family.

Its subcellular location is the cell membrane. This is an uncharacterized protein from Bacillus subtilis (strain 168).